We begin with the raw amino-acid sequence, 398 residues long: S-adenosylmethionine decarboxylase proenzyme (398 aa).

Catalysis depends on residues glutamate 18 and glutamate 21. The active-site Schiff-base intermediate with substrate; via pyruvic acid is the serine 78. Serine 78 is subject to Pyruvic acid (Ser); by autocatalysis. Cysteine 92 acts as the Proton donor; for catalytic activity in catalysis. Catalysis depends on proton acceptor; for processing activity residues serine 243 and histidine 256.

It belongs to the eukaryotic AdoMetDC family. Pyruvate is required as a cofactor. Post-translationally, is synthesized initially as an inactive proenzyme. Formation of the active enzyme involves a self-maturation process in which the active site pyruvoyl group is generated from an internal serine residue via an autocatalytic post-translational modification. Two non-identical subunits are generated from the proenzyme in this reaction, and the pyruvate is formed at the N-terminus of the alpha chain, which is derived from the carboxyl end of the proenzyme. The post-translation cleavage follows an unusual pathway, termed non-hydrolytic serinolysis, in which the side chain hydroxyl group of the serine supplies its oxygen atom to form the C-terminus of the beta chain, while the remainder of the serine residue undergoes an oxidative deamination to produce ammonia and the pyruvoyl group blocking the N-terminus of the alpha chain.

It carries out the reaction S-adenosyl-L-methionine + H(+) = S-adenosyl 3-(methylsulfanyl)propylamine + CO2. It functions in the pathway amine and polyamine biosynthesis; S-adenosylmethioninamine biosynthesis; S-adenosylmethioninamine from S-adenosyl-L-methionine: step 1/1. This Oryza sativa subsp. indica (Rice) protein is S-adenosylmethionine decarboxylase proenzyme (SAMDC).